A 103-amino-acid chain; its full sequence is UPF0145 protein PBPRB0184 (103 aa).

Belongs to the UPF0145 family.

The protein is UPF0145 protein PBPRB0184 of Photobacterium profundum (strain SS9).